Reading from the N-terminus, the 294-residue chain is MSAHFRSVALIGKYQSADVAESVFAIANHLRQRGLVVWIEQGTASSIGGAADFTVASYEEIGSRAELAVVIGGDGTMLNAARRLAEHQVPLVGVNLGRLGFLTDVARSDALQRLEEIVDGRYSEESRFMLDAEVLRSGERVFQTLALNDVVVNKGDLGRMIEFDLSIDGEFVYTQRSDGMIISTPTGSTAYALSANGPILHPGVGGIALVPLCPHALTARPVTLPDTCRIEIRLLPPHDASIHFDGQARFDARAGDCVRLGRSPLAVRLLHPEGYNYYAMLREKLHWSAVPRHN.

Catalysis depends on Asp-74, which acts as the Proton acceptor. NAD(+) is bound by residues 74-75 (DG), 148-149 (ND), Arg-159, Arg-176, Asp-178, 189-194 (TAYALS), and Gln-247.

This sequence belongs to the NAD kinase family. A divalent metal cation serves as cofactor.

The protein resides in the cytoplasm. The catalysed reaction is NAD(+) + ATP = ADP + NADP(+) + H(+). Functionally, involved in the regulation of the intracellular balance of NAD and NADP, and is a key enzyme in the biosynthesis of NADP. Catalyzes specifically the phosphorylation on 2'-hydroxyl of the adenosine moiety of NAD to yield NADP. This Azoarcus sp. (strain BH72) protein is NAD kinase.